Here is a 505-residue protein sequence, read N- to C-terminus: ATP synthase subunit alpha (505 aa).

170 to 177 (GDRQTGKT) is an ATP binding site.

Belongs to the ATPase alpha/beta chains family. In terms of assembly, F-type ATPases have 2 components, CF(1) - the catalytic core - and CF(0) - the membrane proton channel. CF(1) has five subunits: alpha(3), beta(3), gamma(1), delta(1), epsilon(1). CF(0) has four main subunits: a(1), b(1), b'(1) and c(9-12).

The protein localises to the cellular thylakoid membrane. It catalyses the reaction ATP + H2O + 4 H(+)(in) = ADP + phosphate + 5 H(+)(out). Functionally, produces ATP from ADP in the presence of a proton gradient across the membrane. The alpha chain is a regulatory subunit. This is ATP synthase subunit alpha from Prochlorococcus marinus subsp. pastoris (strain CCMP1986 / NIES-2087 / MED4).